Reading from the N-terminus, the 282-residue chain is Acetyl-coenzyme A carboxylase carboxyl transferase subunit beta (282 aa).

The CoA carboxyltransferase N-terminal domain occupies 29 to 282 (LMKRCPNCGL…LLKYGGMQDD (254 aa)). The Zn(2+) site is built by C33, C36, C51, and C54. Residues 33 to 54 (CPNCGLEFFARRLDKYKTCPDC) form a C4-type zinc finger.

The protein belongs to the AccD/PCCB family. As to quaternary structure, acetyl-CoA carboxylase is a heterohexamer composed of biotin carboxyl carrier protein (AccB), biotin carboxylase (AccC) and two subunits each of ACCase subunit alpha (AccA) and ACCase subunit beta (AccD). It depends on Zn(2+) as a cofactor.

The protein localises to the cytoplasm. The enzyme catalyses N(6)-carboxybiotinyl-L-lysyl-[protein] + acetyl-CoA = N(6)-biotinyl-L-lysyl-[protein] + malonyl-CoA. It participates in lipid metabolism; malonyl-CoA biosynthesis; malonyl-CoA from acetyl-CoA: step 1/1. Functionally, component of the acetyl coenzyme A carboxylase (ACC) complex. Biotin carboxylase (BC) catalyzes the carboxylation of biotin on its carrier protein (BCCP) and then the CO(2) group is transferred by the transcarboxylase to acetyl-CoA to form malonyl-CoA. The chain is Acetyl-coenzyme A carboxylase carboxyl transferase subunit beta from Lactobacillus delbrueckii subsp. bulgaricus (strain ATCC 11842 / DSM 20081 / BCRC 10696 / JCM 1002 / NBRC 13953 / NCIMB 11778 / NCTC 12712 / WDCM 00102 / Lb 14).